Here is an 839-residue protein sequence, read N- to C-terminus: Autophagy-related protein 9A (839 aa).

The tract at residues 1-20 is disordered; sequence MAQFDTEYQRLEASYSDSPP. An N-acetylalanine modification is found at Ala2. The Cytoplasmic portion of the chain corresponds to 2 to 61; that stretch reads AQFDTEYQRLEASYSDSPPGEEDLLVHVAEGSKSPWHHIENLDLFFSRVYNLHQKNGFTC. A Tyrosine-based sorting signal motif is present at residues 8 to 11; that stretch reads YQRL. Ser14, Ser16, and Ser18 each carry phosphoserine. Residues 62–84 traverse the membrane as a helical segment; the sequence is MLIGEIFELMQFLFVVAFTTFLV. Residues 85–128 lie on the Lumenal side of the membrane; the sequence is SCVDYDILFANKMVNHSLHPTEPVKVTLPDAFLPAQVCSARIQE. N-linked (GlcNAc...) asparagine glycosylation is present at Asn99. Residues 129–154 traverse the membrane as a helical segment; that stretch reads NGSLITILVIAGVFWIHRLIKFIYNI. Topologically, residues 155-290 are cytoplasmic; sequence CCYWEIHSFY…ELAQRLSNRI (136 aa). Residues 291–301 lie within the membrane without spanning it; that stretch reads LWIGIANFLLC. Residues 302–319 lie on the Cytoplasmic side of the membrane; it reads PLILIWQILYAFFSYAEV. Residues 320–328 lie within the membrane without spanning it; that stretch reads LKREPGALG. Residues 329–371 lie on the Cytoplasmic side of the membrane; sequence ARCWSLYGRCYLRHFNELEHELQSRLNRGYKPASKYMNCFLSP. A helical transmembrane segment spans residues 372–397; that stretch reads LLTLLAKNGAFFAGSILAVLIALTIY. Topologically, residues 398-406 are lumenal; the sequence is DEDVLAVEH. Residues 407–424 traverse the membrane as a helical segment; sequence VLTTVTLLGVTVTVCRSF. Over 425 to 470 the chain is Cytoplasmic; it reads IPDQHMVFCPEQLLRVILAHIHYMPDHWQGNAHRSQTRDEFAQLFQ. An intramembrane segment occupies 471-480; sequence YKAVFILEEL. The Cytoplasmic segment spans residues 481–483; it reads LSP. An intramembrane segment occupies 484–492; the sequence is IVTPLILIF. Over 493 to 839 the chain is Cytoplasmic; the sequence is CLRPRALEII…DELPPQVHKV (347 aa). Phosphoserine is present on residues Ser656, Ser735, Ser738, Ser741, and Ser828. Disordered regions lie at residues 656 to 686 and 717 to 839; these read SPLQPGQAPTGRAHSTMTGSGVDARTASSGS and HKQQ…VHKV. Residues 724–736 are compositionally biased toward basic and acidic residues; it reads EPERHVWHRRESD. Composition is skewed to acidic residues over residues 737–747 and 823–832; these read ESGESAPDEGG and VPEEGSEDEL.

This sequence belongs to the ATG9 family. As to quaternary structure, homotrimer; forms a homotrimer with a central pore that forms a path between the two membrane leaflets. Interacts (via cytoplasmic its C-terminus) with ATG2A. Interacts with SUPT20H. Interacts (via the tyrosine-based sorting signal motif) with AP4M1; promoting association with the AP-4 complex. Interacts with ARFIP1 and ARFIP2. Interacts with PI4K2A and PI4KB. Interacts with ATG4A; the interaction is direct and promotes ATG9A trafficking. Ufmylated in a DDRGK1 dependent manner.

It is found in the preautophagosomal structure membrane. Its subcellular location is the cytoplasmic vesicle. The protein resides in the autophagosome membrane. It localises to the golgi apparatus. The protein localises to the trans-Golgi network membrane. It is found in the late endosome membrane. Its subcellular location is the recycling endosome membrane. The protein resides in the endoplasmic reticulum membrane. It localises to the mitochondrion membrane. The enzyme catalyses a 1,2-diacyl-sn-glycero-3-phosphocholine(in) = a 1,2-diacyl-sn-glycero-3-phosphocholine(out). The catalysed reaction is a 1,2-diacyl-sn-glycero-3-phospho-L-serine(in) = a 1,2-diacyl-sn-glycero-3-phospho-L-serine(out). It catalyses the reaction a 1,2-diacyl-sn-glycero-3-phosphoethanolamine(in) = a 1,2-diacyl-sn-glycero-3-phosphoethanolamine(out). Phospholipid scramblase involved in autophagy by mediating autophagosomal membrane expansion. Cycles between the preautophagosomal structure/phagophore assembly site (PAS) and the cytoplasmic vesicle pool and supplies membrane for the growing autophagosome. Lipid scramblase activity plays a key role in preautophagosomal structure/phagophore assembly by distributing the phospholipids that arrive through ATG2 (ATG2A or ATG2B) from the cytoplasmic to the luminal leaflet of the bilayer, thereby driving autophagosomal membrane expansion. Also required to supply phosphatidylinositol 4-phosphate to the autophagosome initiation site by recruiting the phosphatidylinositol 4-kinase beta (PI4KB) in a process dependent on ARFIP2, but not ARFIP1. In addition to autophagy, also plays a role in necrotic cell death. The polypeptide is Autophagy-related protein 9A (Homo sapiens (Human)).